The following is a 433-amino-acid chain: Putative wall-associated receptor kinase-like 16 (433 aa).

The first 22 residues, 1–22, serve as a signal peptide directing secretion; the sequence is MKLQHVVYLVAIFFVVAIFVIA. The Extracellular portion of the chain corresponds to 23 to 29; it reads CIEENKY. A helical transmembrane segment spans residues 30-50; it reads LVWIMIILANTTNILSLVRSI. Residues 51–433 are Cytoplasmic-facing; that stretch reads SYIKNIRKHQ…VARFDIEAGR (383 aa). Residue T97 is modified to Phosphothreonine. The 284-residue stretch at 108–391 folds into the Protein kinase domain; sequence YDVSRILGQG…RAKTTKHNWL (284 aa). Residues 114–122 and K136 contribute to the ATP site; that span reads LGQGGQWTV. Position 181 is a phosphotyrosine (Y181). D233 serves as the catalytic Proton acceptor. Phosphothreonine is present on residues T267 and T272. Position 280 is a phosphotyrosine (Y280).

It belongs to the protein kinase superfamily. Ser/Thr protein kinase family.

Its subcellular location is the membrane. The catalysed reaction is L-seryl-[protein] + ATP = O-phospho-L-seryl-[protein] + ADP + H(+). It carries out the reaction L-threonyl-[protein] + ATP = O-phospho-L-threonyl-[protein] + ADP + H(+). In terms of biological role, putative serine/threonine-protein kinase that may function as a signaling receptor of extracellular matrix component. The sequence is that of Putative wall-associated receptor kinase-like 16 (WAKL16) from Arabidopsis thaliana (Mouse-ear cress).